A 516-amino-acid chain; its full sequence is 2-isopropylmalate synthase (516 aa).

The Pyruvate carboxyltransferase domain maps to 5-267; it reads VIIFDTTLRD…TTGIKHDEIS (263 aa). Residues aspartate 14, histidine 202, histidine 204, and asparagine 238 each coordinate Mn(2+). The segment at 392–516 is regulatory domain; the sequence is KLNYLSVQSG…IKQKKSVATV (125 aa).

Belongs to the alpha-IPM synthase/homocitrate synthase family. LeuA type 1 subfamily. As to quaternary structure, homodimer. The cofactor is Mn(2+).

It is found in the cytoplasm. The enzyme catalyses 3-methyl-2-oxobutanoate + acetyl-CoA + H2O = (2S)-2-isopropylmalate + CoA + H(+). The protein operates within amino-acid biosynthesis; L-leucine biosynthesis; L-leucine from 3-methyl-2-oxobutanoate: step 1/4. Functionally, catalyzes the condensation of the acetyl group of acetyl-CoA with 3-methyl-2-oxobutanoate (2-ketoisovalerate) to form 3-carboxy-3-hydroxy-4-methylpentanoate (2-isopropylmalate). This chain is 2-isopropylmalate synthase, found in Vibrio cholerae serotype O1 (strain ATCC 39315 / El Tor Inaba N16961).